The primary structure comprises 66 residues: SPbeta prophage-derived uncharacterized protein YopM (66 aa).

The chain is SPbeta prophage-derived uncharacterized protein YopM (yopM) from Bacillus subtilis (strain 168).